The sequence spans 137 residues: MPNPAELAAHHWGFAAFLLGVVGLLAFMLGVSSLLGSKAFGRSKNEPFESGIVPTGGARLRLSAKFYLVAMLFVIFDVEALFLFAWSVSVRESGWAGLIEATIFIAILLAGLVYLWRIGALDWAPESRRKRQAKLKQ.

Helical transmembrane passes span 12–32 (WGFAAFLLGVVGLLAFMLGVS), 66–86 (FYLVAMLFVIFDVEALFLFAW), and 95–115 (WAGLIEATIFIAILLAGLVYL).

It belongs to the complex I subunit 3 family. As to quaternary structure, NDH-1 is composed of 13 different subunits. Subunits NuoA, H, J, K, L, M, N constitute the membrane sector of the complex.

The protein resides in the cell inner membrane. The catalysed reaction is a quinone + NADH + 5 H(+)(in) = a quinol + NAD(+) + 4 H(+)(out). In terms of biological role, NDH-1 shuttles electrons from NADH, via FMN and iron-sulfur (Fe-S) centers, to quinones in the respiratory chain. The immediate electron acceptor for the enzyme in this species is believed to be ubiquinone. Couples the redox reaction to proton translocation (for every two electrons transferred, four hydrogen ions are translocated across the cytoplasmic membrane), and thus conserves the redox energy in a proton gradient. This is NADH-quinone oxidoreductase subunit A 2 from Pseudomonas aeruginosa (strain ATCC 15692 / DSM 22644 / CIP 104116 / JCM 14847 / LMG 12228 / 1C / PRS 101 / PAO1).